Reading from the N-terminus, the 1273-residue chain is ABC transporter B family member 2 (1273 aa).

Residues 1–30 (MYISLIFFLSNHFPPLISIPIFIFLSFSSP) form the signal peptide. Helical transmembrane passes span 66 to 86 (FSFA…GACI), 91 to 111 (VPIF…AYLF), 126 to 146 (FVYL…CWMH), 209 to 229 (FIAG…VTLS), 230 to 250 (IVPL…GLIA), 305 to 325 (GLGL…LVWF), and 345 to 365 (LNVV…SAFV). The ABC transmembrane type-1 1 domain occupies 77 to 366 (MTLGSVGACI…AAPDISAFVR (290 aa)). One can recognise an ABC transporter 1 domain in the interval 401–637 (IQFKDATFSY…PDGAYSSLLR (237 aa)). ATP is bound at residue 436–443 (GGSGSGKS). N-linked (GlcNAc...) asparagine glycosylation is found at Asn-466 and Asn-651. The region spanning 710–997 (GVCGTICAFI…TLALAPDLLK (288 aa)) is the ABC transmembrane type-1 2 domain. Transmembrane regions (helical) follow at residues 711-731 (VCGT…ALGV) and 752-772 (IAIL…IEHI). N-linked (GlcNAc...) asparagine glycosylation is present at Asn-806. A run of 3 helical transmembrane segments spans residues 832–852 (ILLQ…ILNW), 934–954 (IAGL…GLAL), and 975–995 (FMVL…APDL). Residues 1030 to 1266 (IELKGVHFSY…KSGPYFKLIS (237 aa)) enclose the ABC transporter 2 domain. 1065-1072 (GQSGSGKS) is a binding site for ATP. Asn-1217 and Asn-1256 each carry an N-linked (GlcNAc...) asparagine glycan.

The protein belongs to the ABC transporter superfamily. ABCB family. Multidrug resistance exporter (TC 3.A.1.201) subfamily. In terms of assembly, interacts with 1-naphthylphthalamic acid (NPA).

It localises to the membrane. The polypeptide is ABC transporter B family member 2 (ABCB2) (Arabidopsis thaliana (Mouse-ear cress)).